We begin with the raw amino-acid sequence, 274 residues long: MKKVVKLNNIKIGNDLQFVLIAGPCQIEDEDHALFMAEKLIQLTSKLSIPFIYKSSFDKANRTSINGIRGLGIEKGLEILSKVKSEFNCPIITDVHSESQCTDTAKVVDILQIPAFLCRQTDLLKAAAKTGKIVKVKKGQFLAPWDMKNVQTKLEAFGAKDILFTERGSCFGYNNLISDMRSLAIMSELNVPVVFDATHSVQQPGGRGGSSGGERKYVELLAKAAISVGIAGIYMEVHQDPDNAPSDGPCMIKLDHLESILIKLKKYDKITKEE.

The protein belongs to the KdsA family.

The protein localises to the cytoplasm. It carries out the reaction D-arabinose 5-phosphate + phosphoenolpyruvate + H2O = 3-deoxy-alpha-D-manno-2-octulosonate-8-phosphate + phosphate. It functions in the pathway carbohydrate biosynthesis; 3-deoxy-D-manno-octulosonate biosynthesis; 3-deoxy-D-manno-octulosonate from D-ribulose 5-phosphate: step 2/3. It participates in bacterial outer membrane biogenesis; lipopolysaccharide biosynthesis. This is 2-dehydro-3-deoxyphosphooctonate aldolase from Rickettsia typhi (strain ATCC VR-144 / Wilmington).